The chain runs to 153 residues: Aspartate carbamoyltransferase regulatory chain (153 aa).

4 residues coordinate Zn(2+): C109, C114, C138, and C141.

The protein belongs to the PyrI family. As to quaternary structure, contains catalytic and regulatory chains. It depends on Zn(2+) as a cofactor.

Involved in allosteric regulation of aspartate carbamoyltransferase. This Escherichia coli O7:K1 (strain IAI39 / ExPEC) protein is Aspartate carbamoyltransferase regulatory chain.